We begin with the raw amino-acid sequence, 118 residues long: UPF0102 protein CMM_1377 (118 aa).

The protein belongs to the UPF0102 family.

This Clavibacter michiganensis subsp. michiganensis (strain NCPPB 382) protein is UPF0102 protein CMM_1377.